Reading from the N-terminus, the 542-residue chain is NAD-dependent deacetylase sir2D (542 aa).

Disordered stretches follow at residues 1 to 37 and 136 to 160; these read MNKR…NTPL and ETST…TTTT. Positions 8 to 25 are enriched in low complexity; it reads NNELNEIQNNQNKNNNNK. A coiled-coil region spans residues 165–193; it reads NETILLDILNNNKDEVDDEIQRIGNNVGN. Positions 283–542 constitute a Deacetylase sirtuin-type domain; it reads ATLDLSTFEK…VQDLLNKVKW (260 aa). His-411 serves as the catalytic Proton acceptor. The Zn(2+) site is built by Cys-419, Cys-422, Cys-443, and Cys-446.

The protein belongs to the sirtuin family. Zn(2+) serves as cofactor.

The catalysed reaction is N(6)-acetyl-L-lysyl-[protein] + NAD(+) + H2O = 2''-O-acetyl-ADP-D-ribose + nicotinamide + L-lysyl-[protein]. NAD-dependent deacetylase, which plays an important role in the regulation of transcriptional repression. This Dictyostelium discoideum (Social amoeba) protein is NAD-dependent deacetylase sir2D (sir2D).